The chain runs to 338 residues: tRNA N6-adenosine threonylcarbamoyltransferase (338 aa).

His-109 and His-113 together coordinate Fe cation. Substrate-binding positions include 132–136 (AISGA), Asp-165, Gly-178, and Asn-277. Asp-302 provides a ligand contact to Fe cation.

This sequence belongs to the KAE1 / TsaD family. Requires Fe(2+) as cofactor.

It localises to the cytoplasm. It catalyses the reaction L-threonylcarbamoyladenylate + adenosine(37) in tRNA = N(6)-L-threonylcarbamoyladenosine(37) in tRNA + AMP + H(+). Its function is as follows. Required for the formation of a threonylcarbamoyl group on adenosine at position 37 (t(6)A37) in tRNAs that read codons beginning with adenine. Is involved in the transfer of the threonylcarbamoyl moiety of threonylcarbamoyl-AMP (TC-AMP) to the N6 group of A37, together with TsaE and TsaB. TsaD likely plays a direct catalytic role in this reaction. The protein is tRNA N6-adenosine threonylcarbamoyltransferase of Chlamydia trachomatis serovar A (strain ATCC VR-571B / DSM 19440 / HAR-13).